The chain runs to 1382 residues: DNA-directed RNA polymerase subunit beta (1382 aa).

The protein belongs to the RNA polymerase beta chain family. In terms of assembly, the RNAP catalytic core consists of 2 alpha, 1 beta, 1 beta' and 1 omega subunit. When a sigma factor is associated with the core the holoenzyme is formed, which can initiate transcription.

The enzyme catalyses RNA(n) + a ribonucleoside 5'-triphosphate = RNA(n+1) + diphosphate. DNA-dependent RNA polymerase catalyzes the transcription of DNA into RNA using the four ribonucleoside triphosphates as substrates. This Paracoccus denitrificans (strain Pd 1222) protein is DNA-directed RNA polymerase subunit beta.